The primary structure comprises 252 residues: Imidazole glycerol phosphate synthase subunit HisF (252 aa).

Residues aspartate 11 and aspartate 130 contribute to the active site.

It belongs to the HisA/HisF family. In terms of assembly, heterodimer of HisH and HisF.

Its subcellular location is the cytoplasm. It carries out the reaction 5-[(5-phospho-1-deoxy-D-ribulos-1-ylimino)methylamino]-1-(5-phospho-beta-D-ribosyl)imidazole-4-carboxamide + L-glutamine = D-erythro-1-(imidazol-4-yl)glycerol 3-phosphate + 5-amino-1-(5-phospho-beta-D-ribosyl)imidazole-4-carboxamide + L-glutamate + H(+). It functions in the pathway amino-acid biosynthesis; L-histidine biosynthesis; L-histidine from 5-phospho-alpha-D-ribose 1-diphosphate: step 5/9. Functionally, IGPS catalyzes the conversion of PRFAR and glutamine to IGP, AICAR and glutamate. The HisF subunit catalyzes the cyclization activity that produces IGP and AICAR from PRFAR using the ammonia provided by the HisH subunit. This chain is Imidazole glycerol phosphate synthase subunit HisF, found in Staphylococcus saprophyticus subsp. saprophyticus (strain ATCC 15305 / DSM 20229 / NCIMB 8711 / NCTC 7292 / S-41).